The sequence spans 836 residues: ATP-binding cassette sub-family B member 6 (836 aa).

At 1–26 (MVTVGNYCEAEGPAGPAWTQNGLSPC) the chain is on the lumenal side. Residues 1–205 (MVTVGNYCEA…SGGLFILGLW (205 aa)) are required for the lysosomal targeting. Residues 1 to 236 (MVTVGNYCEA…RNQGRSTDPR (236 aa)) are required for ATPase activity. Cys-8 and Cys-26 are disulfide-bonded. Residues 27-47 (FFYTLVPSTLMTLGVLALVLV) traverse the membrane as a helical segment. At 48–72 (LPCRRREVPAGTEELSWAAGPRVAP) the chain is on the cytoplasmic side. A helical transmembrane segment spans residues 73 to 93 (YALQLSLAILQMALPLASLAG). Topologically, residues 94–106 (RVGTARGVRLPGY) are lumenal. The helical transmembrane segment at 107 to 127 (LLLASVLESLASACGLWLLVV) threads the bilayer. Residues 128–147 (ERSQARQSLAMGVWMKFRHS) are Cytoplasmic-facing. Residues 148-168 (LGLLLLWTVTFAAENLVLVSW) traverse the membrane as a helical segment. Residues 169-185 (NSPQWWWSRADLGQQVQ) are Lumenal-facing. A helical transmembrane segment spans residues 186 to 206 (FGLWVLRYMTSGGLFILGLWA). At 207 to 264 (PGLRPQSYTLHVNEEDQDGGRNQGRSTDPRSTWRDLGRKLRLLSGYLWPRGSPSLQLT) the chain is on the cytoplasmic side. The chain crosses the membrane as a helical span at residues 265 to 285 (VLLCMGLMGLDRALNVLVPIF). The ABC transmembrane type-1 domain occupies 265–556 (VLLCMGLMGL…FGTYYRMIQT (292 aa)). Residues 286-305 (YRDIVNLLTSKAPWSSLAWT) are Lumenal-facing. The chain crosses the membrane as a helical span at residues 306-326 (VTTYVFLKFLQGGGTGSTGFV). Topologically, residues 327–375 (SNLRTFLWIRVQQFTSRGVELRLFSHLHELSLRWHLGRRTGEVLRIVDR) are cytoplasmic. The chain crosses the membrane as a helical span at residues 376–396 (GTSSVTGLLSYLVFNIIPTLA). Residue Asp-397 is a topological domain, lumenal. The chain crosses the membrane as a helical span at residues 398 to 418 (IIIGIIYFSMFFNAWFGLIVF). Topologically, residues 419-499 (LCMSLYLILT…STASLVLLNQ (81 aa)) are cytoplasmic. The helical transmembrane segment at 500-520 (TQNMVIGFGLLAGSLLCAYFV) threads the bilayer. The Lumenal segment spans residues 521–529 (SERRLQVGD). A helical transmembrane segment spans residues 530–550 (FVLFGTYITQLYMPLNWFGTY). Residues 551-836 (YRMIQTNFID…QGQETVPEDS (286 aa)) lie on the Cytoplasmic side of the membrane. An ABC transporter domain is found at 590-824 (VEFENVHFSY…GGVYAEMWQL (235 aa)). ATP is bound by residues Tyr-599 and 623–634 (GPSGAGKSTILR).

Belongs to the ABC transporter superfamily. ABCB family. Heavy Metal importer (TC 3.A.1.210) subfamily. As to quaternary structure, homodimer. N-glycosylated. In terms of tissue distribution, ubiquitously expressed. Highly expressed in testis by meiotic pachytene spermatocytes and post-meiotic early spermatids.

Its subcellular location is the cell membrane. The protein localises to the mitochondrion outer membrane. It localises to the endoplasmic reticulum membrane. The protein resides in the golgi apparatus membrane. It is found in the endosome membrane. Its subcellular location is the lysosome membrane. The protein localises to the late endosome membrane. It localises to the early endosome membrane. The protein resides in the secreted. It is found in the extracellular exosome. Its subcellular location is the mitochondrion. The protein localises to the endosome. It localises to the multivesicular body membrane. The protein resides in the melanosome membrane. The enzyme catalyses heme b(in) + ATP + H2O = heme b(out) + ADP + phosphate + H(+). The catalysed reaction is coproporphyrin III(in) + ATP + H2O = coproporphyrin III(out) + ADP + phosphate + H(+). It carries out the reaction pheophorbide a(in) + ATP + H2O = pheophorbide a(out) + ADP + phosphate + H(+). It catalyses the reaction coproporphyrinogen III(in) + ATP + H2O = coproporphyrinogen III(out) + ADP + phosphate + H(+). The enzyme catalyses protoporphyrin IX(in) + ATP + H2O = protoporphyrin IX(out) + ADP + phosphate + H(+). The catalysed reaction is coproporphyrin I(in) + ATP + H2O = coproporphyrin I(out) + ADP + phosphate + H(+). It carries out the reaction uroporphyrin I(in) + ATP + H2O = uroporphyrin I(out) + ADP + phosphate + H(+). It catalyses the reaction uroporphyrin III(in) + ATP + H2O = uroporphyrin III(out) + ADP + phosphate + H(+). Its function is as follows. ATP-dependent transporter that catalyzes the transport of a broad-spectrum of porphyrins from the cytoplasm to the extracellular space through the plasma membrane or into the vesicle lumen. May also function as an ATP-dependent importer of porphyrins from the cytoplasm into the mitochondria, in turn may participate in the de novo heme biosynthesis regulation and in the coordination of heme and iron homeostasis during phenylhydrazine stress. May play a key role in the early steps of melanogenesis producing PMEL amyloid fibrils. In vitro, it confers to cells a resistance to toxic metal such as arsenic and cadmium and against chemotherapeutics agent such as 5-fluorouracil, SN-38 and vincristin. In addition may play a role in the transition metal homeostasis. This is ATP-binding cassette sub-family B member 6 from Rattus norvegicus (Rat).